Reading from the N-terminus, the 827-residue chain is N-terminal kinase-like protein (827 aa).

The Protein kinase domain occupies 1–309; it reads MWFWSRDPAR…PEDFCRHKIL (309 aa). 3 HEAT repeats span residues 345–383, 384–422, and 502–540; these read IIPV…VNAQ, IFPH…LNME, and VLPV…EDPS. Over residues 586-624 the composition is skewed to low complexity; it reads DAAASEGASAPSTASEASKPDTAPSSSAPPAAASTAPTS. The tract at residues 586–827 is disordered; sequence DAAASEGASA…PLKLGVRKLD (242 aa). Basic and acidic residues predominate over residues 630-640; the sequence is EKGAPDNSLDR. Acidic residues predominate over residues 641–652; sequence WDDEDWGSLEDA. The span at 667–678 shows a compositional bias: basic and acidic residues; that stretch reads DWGHGKTQEKTV. Polar residues-rich tracts occupy residues 679–690 and 737–746; these read DFSSSRSKTKQV and NWDTSGSSGR. The segment covering 774–783 has biased composition (acidic residues); it reads GGDDNWESVE. A coiled-coil region spans residues 788-817; that stretch reads LSKAEMARKKREERQKEIEAKRAERRAAKG. The segment covering 792–814 has biased composition (basic and acidic residues); the sequence is EMARKKREERQKEIEAKRAERRA.

Belongs to the protein kinase superfamily.

Its function is as follows. Regulates COPI-mediated retrograde protein traffic at the interface between the Golgi apparatus and the endoplasmic reticulum. Involved in the maintenance of the Golgi apparatus morphology. This chain is N-terminal kinase-like protein (scyl1), found in Xenopus tropicalis (Western clawed frog).